The chain runs to 83 residues: Non-muscle caldesmon (83 aa).

Composition is skewed to basic and acidic residues over residues 1 to 44 (QTSE…KEEK) and 62 to 76 (NQLKDEKTKKDKESK). The tract at residues 1–63 (QTSEKEGRSE…PKPGSIEENQ (63 aa)) is myosin and calmodulin-binding. Residues 1–83 (QTSEKEGRSE…ESKNILSLCL (83 aa)) form a disordered region.

Post-translationally, in non-muscle cells, phosphorylation by CDC2 during mitosis causes caldesmon to dissociate from microfilaments. Phosphorylation reduces caldesmon binding to actin, myosin, and calmodulin as well as its inhibition of actomyosin ATPase activity. Phosphorylation also occurs in both quiescent and dividing smooth muscle cells with similar effects on the interaction with actin and calmodulin and on microfilaments reorganization.

It localises to the cytoplasm. The protein localises to the cytoskeleton. The protein resides in the myofibril. It is found in the stress fiber. Actin- and myosin-binding protein implicated in the regulation of actomyosin interactions in smooth muscle and nonmuscle cells (could act as a bridge between myosin and actin filaments). Stimulates actin binding of tropomyosin which increases the stabilization of actin filament structure. In muscle tissues, inhibits the actomyosin ATPase by binding to F-actin. This inhibition is attenuated by calcium-calmodulin and is potentiated by tropomyosin. Interacts with actin, myosin, two molecules of tropomyosin and with calmodulin. Also plays an essential role during cellular mitosis and receptor capping. The protein is Non-muscle caldesmon (CALD1) of Bos taurus (Bovine).